The primary structure comprises 186 residues: TATA-box-binding protein F (186 aa).

2 tandem repeats follow at residues 10–86 and 101–179.

This sequence belongs to the TBP family.

In terms of biological role, general factor that plays a role in the activation of archaeal genes transcribed by RNA polymerase. Binds specifically to the TATA box promoter element which lies close to the position of transcription initiation. The sequence is that of TATA-box-binding protein F (tbpF) from Halobacterium salinarum (strain ATCC 700922 / JCM 11081 / NRC-1) (Halobacterium halobium).